The chain runs to 198 residues: MARMMGPRFKQSRRLGLNVCGHPKANKRMGKGLGRNDKKLTEYGMQLLEKQRLRAYYGVNEKQMHKYFEKALNNKEGLTTGDVMVRQLETRLDNLVLRASFASSIRQARQMVSHGLIRVNGKKVDIPSFQVAEGSVIELKEKSRSNELFKENYETNFAQSLPYIDKEENFKVTLTRLPERQEIPIEITDSLIVELYSR.

The S4 RNA-binding domain occupies 90-152 (TRLDNLVLRA…SRSNELFKEN (63 aa)).

Belongs to the universal ribosomal protein uS4 family. As to quaternary structure, part of the 30S ribosomal subunit. Contacts protein S5. The interaction surface between S4 and S5 is involved in control of translational fidelity.

In terms of biological role, one of the primary rRNA binding proteins, it binds directly to 16S rRNA where it nucleates assembly of the body of the 30S subunit. Functionally, with S5 and S12 plays an important role in translational accuracy. The sequence is that of Small ribosomal subunit protein uS4 from Finegoldia magna (strain ATCC 29328 / DSM 20472 / WAL 2508) (Peptostreptococcus magnus).